A 610-amino-acid chain; its full sequence is UvrABC system protein C (610 aa).

Residues 19-97 (GAPGVYKMLD…IKRHKPRYNI (79 aa)) enclose the GIY-YIG domain. Residues 207–242 (EALIDRLAQRMEQAAQRLEFEKAARYRDQISNLRTV) form the UVR domain.

The protein belongs to the UvrC family. In terms of assembly, interacts with UvrB in an incision complex.

Its subcellular location is the cytoplasm. Its function is as follows. The UvrABC repair system catalyzes the recognition and processing of DNA lesions. UvrC both incises the 5' and 3' sides of the lesion. The N-terminal half is responsible for the 3' incision and the C-terminal half is responsible for the 5' incision. This Methylococcus capsulatus (strain ATCC 33009 / NCIMB 11132 / Bath) protein is UvrABC system protein C.